The chain runs to 476 residues: Bifunctional protein HldE (476 aa).

The segment at 1–318 (MLSKKPNILV…EYESSLHKSN (318 aa)) is ribokinase. Position 195-198 (195-198 (NKKE)) interacts with ATP. Asp263 is an active-site residue. Residues 345 to 476 (FTNGCFDILH…RIQENEKCNN (132 aa)) are cytidylyltransferase.

It in the N-terminal section; belongs to the carbohydrate kinase PfkB family. The protein in the C-terminal section; belongs to the cytidylyltransferase family. As to quaternary structure, homodimer.

The catalysed reaction is D-glycero-beta-D-manno-heptose 7-phosphate + ATP = D-glycero-beta-D-manno-heptose 1,7-bisphosphate + ADP + H(+). The enzyme catalyses D-glycero-beta-D-manno-heptose 1-phosphate + ATP + H(+) = ADP-D-glycero-beta-D-manno-heptose + diphosphate. It participates in nucleotide-sugar biosynthesis; ADP-L-glycero-beta-D-manno-heptose biosynthesis; ADP-L-glycero-beta-D-manno-heptose from D-glycero-beta-D-manno-heptose 7-phosphate: step 1/4. It functions in the pathway nucleotide-sugar biosynthesis; ADP-L-glycero-beta-D-manno-heptose biosynthesis; ADP-L-glycero-beta-D-manno-heptose from D-glycero-beta-D-manno-heptose 7-phosphate: step 3/4. Its function is as follows. Catalyzes the phosphorylation of D-glycero-D-manno-heptose 7-phosphate at the C-1 position to selectively form D-glycero-beta-D-manno-heptose-1,7-bisphosphate. Catalyzes the ADP transfer from ATP to D-glycero-beta-D-manno-heptose 1-phosphate, yielding ADP-D-glycero-beta-D-manno-heptose. The protein is Bifunctional protein HldE of Aliarcobacter butzleri (strain RM4018) (Arcobacter butzleri).